Reading from the N-terminus, the 300-residue chain is tRNA dimethylallyltransferase 2 (300 aa).

13-20 (GPTGVGKT) lines the ATP pocket. Residue 15-20 (TGVGKT) participates in substrate binding. Residues 38–41 (DSRQ) are interaction with substrate tRNA.

It belongs to the IPP transferase family. As to quaternary structure, monomer. The cofactor is Mg(2+).

It carries out the reaction adenosine(37) in tRNA + dimethylallyl diphosphate = N(6)-dimethylallyladenosine(37) in tRNA + diphosphate. In terms of biological role, catalyzes the transfer of a dimethylallyl group onto the adenine at position 37 in tRNAs that read codons beginning with uridine, leading to the formation of N6-(dimethylallyl)adenosine (i(6)A). This chain is tRNA dimethylallyltransferase 2, found in Porphyromonas gingivalis (strain ATCC 33277 / DSM 20709 / CIP 103683 / JCM 12257 / NCTC 11834 / 2561).